The primary structure comprises 192 residues: Xanthine phosphoribosyltransferase (192 aa).

The xanthine site is built by leucine 20 and asparagine 27. Residue 128 to 132 coordinates 5-phospho-alpha-D-ribose 1-diphosphate; that stretch reads ANGQA. Lysine 156 provides a ligand contact to xanthine.

This sequence belongs to the purine/pyrimidine phosphoribosyltransferase family. Xpt subfamily. Homodimer.

The protein resides in the cytoplasm. It catalyses the reaction XMP + diphosphate = xanthine + 5-phospho-alpha-D-ribose 1-diphosphate. It functions in the pathway purine metabolism; XMP biosynthesis via salvage pathway; XMP from xanthine: step 1/1. In terms of biological role, converts the preformed base xanthine, a product of nucleic acid breakdown, to xanthosine 5'-monophosphate (XMP), so it can be reused for RNA or DNA synthesis. In Ligilactobacillus salivarius (strain UCC118) (Lactobacillus salivarius), this protein is Xanthine phosphoribosyltransferase.